Consider the following 339-residue polypeptide: Phenylalanine--tRNA ligase alpha subunit (339 aa).

The span at 1 to 14 (MEAKLKQLEEKAKQ) shows a compositional bias: basic and acidic residues. The segment at 1–20 (MEAKLKQLEEKAKQDIQAST) is disordered. Position 254 (Glu-254) interacts with Mg(2+).

This sequence belongs to the class-II aminoacyl-tRNA synthetase family. Phe-tRNA synthetase alpha subunit type 1 subfamily. In terms of assembly, tetramer of two alpha and two beta subunits. Mg(2+) serves as cofactor.

The protein localises to the cytoplasm. The enzyme catalyses tRNA(Phe) + L-phenylalanine + ATP = L-phenylalanyl-tRNA(Phe) + AMP + diphosphate + H(+). This chain is Phenylalanine--tRNA ligase alpha subunit, found in Alkaliphilus metalliredigens (strain QYMF).